A 93-amino-acid polypeptide reads, in one-letter code: Small ribosomal subunit protein bS6 (93 aa).

The protein belongs to the bacterial ribosomal protein bS6 family.

In terms of biological role, binds together with bS18 to 16S ribosomal RNA. This is Small ribosomal subunit protein bS6 from Treponema denticola (strain ATCC 35405 / DSM 14222 / CIP 103919 / JCM 8153 / KCTC 15104).